A 659-amino-acid polypeptide reads, in one-letter code: Interferon-induced GTP-binding protein Mx2 (659 aa).

Residues 65–338 (DLALPAIAVI…LISHICKSLP (274 aa)) form the Dynamin-type G domain. The interval 75-82 (GDQSSGKS) is G1 motif. 75-82 (GDQSSGKS) contacts GTP. Residues 100-102 (VTR) form a G2 motif region. The segment at 176–179 (DLPG) is G3 motif. Residues 176-180 (DLPGI) and 245-248 (TKPD) contribute to the GTP site. The segment at 245-248 (TKPD) is G4 motif. Residues 277–280 (KCRG) are G5 motif. The disordered stretch occupies residues 547–567 (EAEEEERKHGKSRSSQSKNLQ). A GED domain is found at 571 to 659 (MDEIFQHLNA…AQRRLAKFPG (89 aa)).

It belongs to the TRAFAC class dynamin-like GTPase superfamily. Dynamin/Fzo/YdjA family.

The protein resides in the cytoplasm. Its function is as follows. Interferon-induced dynamin-like GTPase with antiviral activity against vesicular stomatitis virus (VSV). The protein is Interferon-induced GTP-binding protein Mx2 (Mx2) of Rattus norvegicus (Rat).